The sequence spans 121 residues: Phosphoribosyl-ATP pyrophosphatase (121 aa).

It belongs to the PRA-PH family.

The protein localises to the cytoplasm. It carries out the reaction 1-(5-phospho-beta-D-ribosyl)-ATP + H2O = 1-(5-phospho-beta-D-ribosyl)-5'-AMP + diphosphate + H(+). It functions in the pathway amino-acid biosynthesis; L-histidine biosynthesis; L-histidine from 5-phospho-alpha-D-ribose 1-diphosphate: step 2/9. The polypeptide is Phosphoribosyl-ATP pyrophosphatase (Burkholderia cenocepacia (strain ATCC BAA-245 / DSM 16553 / LMG 16656 / NCTC 13227 / J2315 / CF5610) (Burkholderia cepacia (strain J2315))).